A 2139-amino-acid chain; its full sequence is U5 small nuclear ribonucleoprotein 200 kDa helicase (2139 aa).

Phosphoserine is present on residues serine 17 and serine 26. Residues 39–80 (EVLSLVGKLEGTRMGDKAQRTKPQMQEERRAKRRKRDEDRHD) are disordered. Residue lysine 46 forms a Glycyl lysine isopeptide (Lys-Gly) (interchain with G-Cter in SUMO2) linkage. Over residues 48-80 (EGTRMGDKAQRTKPQMQEERRAKRRKRDEDRHD) the composition is skewed to basic and acidic residues. The stretch at 54–84 (DKAQRTKPQMQEERRAKRRKRDEDRHDINKM) forms a coiled coil. Serine 225 bears the Phosphoserine mark. The residue at position 389 (threonine 389) is a Phosphothreonine. Residues 395–2132 (DLDQGGEALA…YKFSVDVKEA (1738 aa)) form an interaction with C9orf78 and WBP4 region. One can recognise a Helicase ATP-binding 1 domain in the interval 490 to 673 (RAALETDENL…FLRVDPAKGL (184 aa)). Residue 503 to 510 (APTGAGKT) participates in ATP binding. Residues 615–618 (DEIH) carry the DEAH box motif. Residues 684–921 (PLEQTYVGIT…NAKDAVNWLG (238 aa)) enclose the Helicase C-terminal 1 domain. Tyrosine 709 is subject to Phosphotyrosine. Lysine 944 participates in a covalent cross-link: Glycyl lysine isopeptide (Lys-Gly) (interchain with G-Cter in SUMO). Lysine 971 is subject to N6-acetyllysine; alternate. A Glycyl lysine isopeptide (Lys-Gly) (interchain with G-Cter in SUMO); alternate cross-link involves residue lysine 971. An SEC63 1 domain is found at 982 to 1289 (TELGRIASHY…SCETQLPVSF (308 aa)). Glycyl lysine isopeptide (Lys-Gly) (interchain with G-Cter in SUMO) cross-links involve residues lysine 1071 and lysine 1199. An interaction with TSSC4 region spans residues 1285-2139 (LPVSFRHLIL…KEAETDSDSD (855 aa)). A Helicase ATP-binding 2 domain is found at 1340-1515 (NTVYNSDDNV…WLGCSATSTF (176 aa)). 1353–1360 (APTGSGKT) is an ATP binding site. Threonine 1431 is subject to Phosphothreonine. A DEAH box motif is present at residues 1457 to 1460 (DEVH). The region spanning 1548 to 1756 (PVYHAITKHS…TIENKQDAVD (209 aa)) is the Helicase C-terminal 2 domain. A Phosphothreonine modification is found at threonine 1768. One can recognise an SEC63 2 domain in the interval 1815–2127 (PLNLGMIAAY…GCDQEYKFSV (313 aa)). Serine 2005 carries the post-translational modification Phosphoserine. A Glycyl lysine isopeptide (Lys-Gly) (interchain with G-Cter in SUMO) cross-link involves residue lysine 2094. Phosphothreonine is present on threonine 2134. Residues serine 2136 and serine 2138 each carry the phosphoserine modification.

It belongs to the helicase family. SKI2 subfamily. As to quaternary structure, component of a core complex containing at least PRPF8, SNRNP200, EFTUD2 and SNRNP40. Component of the U5 snRNP and U4/U6-U5 tri-snRNP complexes, building blocks of the spliceosome. Component of the U4/U6-U5 tri-snRNP complex composed of the U4, U6 and U5 snRNAs and at least PRPF3, PRPF4, PRPF6, PRPF8, PRPF31, SNRNP200, TXNL4A, SNRNP40, DDX23, CD2BP2, PPIH, SNU13, EFTUD2, SART1 and USP39. Component of precatalytic, catalytic and postcatalytic spliceosomal complexes. Component of the minor spliceosome, which splices U12-type introns. Interacts with C9orf78; the interaction is direct and mutually exclusive with its interaction with WBP4. Interacts with WBP4; the interaction is mutually exclusive with its interaction with C9orf78. Interacts with PRPF8. Interacts with TSSC4; the interaction is direct, excludes recruitment of C9ORF78 and WBP4 to SNRNP200 and negatively regulates its RNA helicase activity.

Its subcellular location is the nucleus. It carries out the reaction ATP + H2O = ADP + phosphate + H(+). Catalyzes the ATP-dependent unwinding of U4/U6 RNA duplices, an essential step in the assembly of a catalytically active spliceosome. Plays a role in pre-mRNA splicing as core component of precatalytic, catalytic and postcatalytic spliceosomal complexes. As a component of the minor spliceosome, involved in the splicing of U12-type introns in pre-mRNAs. Involved in spliceosome assembly, activation and disassembly. Mediates changes in the dynamic network of RNA-RNA interactions in the spliceosome. The protein is U5 small nuclear ribonucleoprotein 200 kDa helicase (Snrnp200) of Rattus norvegicus (Rat).